The primary structure comprises 314 residues: Probable manganese-dependent inorganic pyrophosphatase (314 aa).

6 residues coordinate Mn(2+): His10, Asp14, Asp16, Asp80, His102, and Asp154.

This sequence belongs to the PPase class C family. The cofactor is Mn(2+).

Its subcellular location is the cytoplasm. It carries out the reaction diphosphate + H2O = 2 phosphate + H(+). The chain is Probable manganese-dependent inorganic pyrophosphatase (ppaC) from Lactococcus lactis subsp. lactis (strain IL1403) (Streptococcus lactis).